A 348-amino-acid chain; its full sequence is Heat-inducible transcription repressor HrcA (348 aa).

The protein belongs to the HrcA family.

Its function is as follows. Negative regulator of class I heat shock genes (grpE-dnaK-dnaJ and groELS operons). Prevents heat-shock induction of these operons. The chain is Heat-inducible transcription repressor HrcA from Thermomicrobium roseum (strain ATCC 27502 / DSM 5159 / P-2).